The following is a 369-amino-acid chain: Chorismate synthase (369 aa).

NADP(+) contacts are provided by Arg48 and Arg54. FMN contacts are provided by residues 125-127 (RSS), 238-239 (NA), Gly278, 293-297 (KPTSS), and Arg319.

Belongs to the chorismate synthase family. Homotetramer. FMNH2 serves as cofactor.

The catalysed reaction is 5-O-(1-carboxyvinyl)-3-phosphoshikimate = chorismate + phosphate. Its pathway is metabolic intermediate biosynthesis; chorismate biosynthesis; chorismate from D-erythrose 4-phosphate and phosphoenolpyruvate: step 7/7. In terms of biological role, catalyzes the anti-1,4-elimination of the C-3 phosphate and the C-6 proR hydrogen from 5-enolpyruvylshikimate-3-phosphate (EPSP) to yield chorismate, which is the branch point compound that serves as the starting substrate for the three terminal pathways of aromatic amino acid biosynthesis. This reaction introduces a second double bond into the aromatic ring system. The protein is Chorismate synthase of Burkholderia thailandensis (strain ATCC 700388 / DSM 13276 / CCUG 48851 / CIP 106301 / E264).